Here is a 169-residue protein sequence, read N- to C-terminus: Succinate dehydrogenase cytochrome b560 subunit, mitochondrial (169 aa).

A mitochondrion-targeting transit peptide spans 1–29 (MAALLLRHVGRHCLRAHFSPQLCIRNAVP). The Mitochondrial matrix portion of the chain corresponds to 30 to 65 (LGTTAKEEMERFWNKNIGSNRPLSPHITIYSWSLPM). A helical transmembrane segment spans residues 66–90 (AMSICHRGTGIALSAGVSLFGMSAL). Topologically, residues 91–110 (LLPGNFESYLELVKSLCLGP) are mitochondrial intermembrane. A helical membrane pass occupies residues 111-139 (ALIHTAKFALVFPLMYHTWNGIRHLMWDL). H127 provides a ligand contact to heme b. Residues 140-146 (GKGLKIP) lie on the Mitochondrial matrix side of the membrane. A helical membrane pass occupies residues 147–167 (QLYQSGVVVLVLTVLSSMGLA). Topologically, residues 168 to 169 (AM) are mitochondrial intermembrane.

The protein belongs to the cytochrome b560 family. As to quaternary structure, component of complex II composed of four subunits: the flavoprotein (FP) SDHA, iron-sulfur protein (IP) SDHB, and a cytochrome b560 composed of SDHC and SDHD. The cofactor is heme b.

It localises to the mitochondrion inner membrane. It functions in the pathway carbohydrate metabolism; tricarboxylic acid cycle. Functionally, membrane-anchoring subunit of succinate dehydrogenase (SDH) that is involved in complex II of the mitochondrial electron transport chain and is responsible for transferring electrons from succinate to ubiquinone (coenzyme Q). SDH also oxidizes malate to the non-canonical enol form of oxaloacetate, enol-oxaloacetate. Enol-oxaloacetate, which is a potent inhibitor of the succinate dehydrogenase activity, is further isomerized into keto-oxaloacetate. The protein is Succinate dehydrogenase cytochrome b560 subunit, mitochondrial (SDHC) of Homo sapiens (Human).